We begin with the raw amino-acid sequence, 359 residues long: MFYHLLYPLHTAFAGFNVFRYITLRSIGAAVCAFLLVLFLGPLFIRTMQRLQIGQVVREDGPETHFKKKGVPTMGGLLILLSVTVSTLLWARLDNPLIWLVLLVTLFFGMIGAYDDYKKISKKTSEGLSAKGKLLLQIAGALIVGFFVYLHPGYDGQLSIPFMKNVQPDLGWFYIVFAVIVIVGASNAVNLTDGLDGLAAGPMVVSSAVYLLFAYLAGNVVLANYLHIPYVAGSGELAIFCGTLFGACLGFLWFNAHPAQMFMGDVGSLALGGALGSIAIIIKQEFLLAIVGGVFVMEALSVMLQVGYFRMSKGKRIFLMAPFHHHFEKKGWSEPKVVVRFWIVSIILGLFAIATLKLR.

Helical transmembrane passes span 27–47 (IGAA…FIRT), 71–91 (VPTM…LLWA), 93–113 (LDNP…MIGA), 134–154 (LLLQ…HPGY), 170–190 (LGWF…NAVN), 203–223 (MVVS…VVLA), 234–254 (SGEL…FLWF), 262–282 (FMGD…AIII), 286–306 (FLLA…MLQV), and 336–356 (KVVV…IATL).

Belongs to the glycosyltransferase 4 family. MraY subfamily. Mg(2+) serves as cofactor.

It localises to the cell inner membrane. The enzyme catalyses UDP-N-acetyl-alpha-D-muramoyl-L-alanyl-gamma-D-glutamyl-meso-2,6-diaminopimeloyl-D-alanyl-D-alanine + di-trans,octa-cis-undecaprenyl phosphate = di-trans,octa-cis-undecaprenyl diphospho-N-acetyl-alpha-D-muramoyl-L-alanyl-D-glutamyl-meso-2,6-diaminopimeloyl-D-alanyl-D-alanine + UMP. The protein operates within cell wall biogenesis; peptidoglycan biosynthesis. Its function is as follows. Catalyzes the initial step of the lipid cycle reactions in the biosynthesis of the cell wall peptidoglycan: transfers peptidoglycan precursor phospho-MurNAc-pentapeptide from UDP-MurNAc-pentapeptide onto the lipid carrier undecaprenyl phosphate, yielding undecaprenyl-pyrophosphoryl-MurNAc-pentapeptide, known as lipid I. This Desulfotalea psychrophila (strain LSv54 / DSM 12343) protein is Phospho-N-acetylmuramoyl-pentapeptide-transferase.